The chain runs to 438 residues: Glycogen synthase (438 aa).

Lys16 is a binding site for ADP-alpha-D-glucose.

This sequence belongs to the glycosyltransferase 1 family. Bacterial/plant glycogen synthase subfamily.

The catalysed reaction is [(1-&gt;4)-alpha-D-glucosyl](n) + ADP-alpha-D-glucose = [(1-&gt;4)-alpha-D-glucosyl](n+1) + ADP + H(+). It functions in the pathway glycan biosynthesis; glycogen biosynthesis. Functionally, synthesizes alpha-1,4-glucan chains using ADP-glucose. The protein is Glycogen synthase of Thermus caldophilus.